A 419-amino-acid chain; its full sequence is Protein farnesyltransferase subunit beta (419 aa).

5 PFTB repeats span residues 68–109 (EDNT…ITLG), 119–160 (RNKL…SVLN), 167–208 (IKNV…ILIG), 215–256 (LPRL…ALLQ), and 329–371 (SIAL…SLCQ). Residues 193–196 (HGGY) and 235–238 (RTNK) contribute to the (2E,6E)-farnesyl diphosphate site. 2 residues coordinate Zn(2+): D241 and C243. A (2E,6E)-farnesyl diphosphate-binding site is contributed by 244-247 (YSFW). Zn(2+) is bound at residue H359.

This sequence belongs to the protein prenyltransferase subunit beta family. Heterodimer of FTA and FTB. Zn(2+) is required as a cofactor.

The enzyme catalyses L-cysteinyl-[protein] + (2E,6E)-farnesyl diphosphate = S-(2E,6E)-farnesyl-L-cysteinyl-[protein] + diphosphate. Catalyzes the transfer of a farnesyl moiety from farnesyl diphosphate to a cysteine at the fourth position from the C-terminus of several proteins. The beta subunit FTB is responsible for peptide-binding. The polypeptide is Protein farnesyltransferase subunit beta (FTB) (Pisum sativum (Garden pea)).